Here is a 118-residue protein sequence, read N- to C-terminus: UPF0295 protein BcerKBAB4_0454 (118 aa).

2 consecutive transmembrane segments (helical) span residues 12–32 and 43–63; these read IRTF…LGVF and FMMV…WIGM.

Belongs to the UPF0295 family.

It is found in the cell membrane. The protein is UPF0295 protein BcerKBAB4_0454 of Bacillus mycoides (strain KBAB4) (Bacillus weihenstephanensis).